A 484-amino-acid chain; its full sequence is Cobyric acid synthase (484 aa).

Residues V248–S435 form the GATase cobBQ-type domain. The active-site Nucleophile is C329. H427 is an active-site residue.

The protein belongs to the CobB/CobQ family. CobQ subfamily.

The protein operates within cofactor biosynthesis; adenosylcobalamin biosynthesis. Functionally, catalyzes amidations at positions B, D, E, and G on adenosylcobyrinic A,C-diamide. NH(2) groups are provided by glutamine, and one molecule of ATP is hydrogenolyzed for each amidation. This is Cobyric acid synthase from Pseudomonas putida (strain GB-1).